Reading from the N-terminus, the 698-residue chain is Probable xyloglucan glycosyltransferase 2 (698 aa).

A run of 2 helical transmembrane segments spans residues 124–144 and 190–210; these read GFLA…WNGW and ILLF…CFWI. Asp272 is a catalytic residue. Residues Asp331 and Asp333 each contribute to the substrate site. Asp425 is a catalytic residue. 4 helical membrane-spanning segments follow: residues 503 to 523, 528 to 548, 653 to 668, and 673 to 693; these read LILP…TMFV, LPVW…ILPS, LALS…RSLL, and IHFY…LDLI.

The protein belongs to the glycosyltransferase 2 family. Plant cellulose synthase-like C subfamily.

Its subcellular location is the golgi apparatus membrane. Functionally, probable beta-1,4-glucan synthase rather involved in the synthesis of the xyloglucan backbone than cellulose. Seems to work simultaneously with xyloglucan 6-xylosyltransferase. Xyloglucan is a noncellulosic polysaccharides of plant cell wall and consists of a glucan backbone substituted by xylose, galactose and fucose. The sequence is that of Probable xyloglucan glycosyltransferase 2 (CSLC2) from Oryza sativa subsp. japonica (Rice).